A 689-amino-acid chain; its full sequence is tRNA 5-methylaminomethyl-2-thiouridine biosynthesis bifunctional protein MnmC (689 aa).

A tRNA (mnm(5)s(2)U34)-methyltransferase region spans residues 1–245; it reads MNQRPIQTAT…KREMLTGTLP (245 aa). The interval 270–689 is FAD-dependent cmnm(5)s(2)U34 oxidoreductase; that stretch reads IGGGIVSALT…RSPATQESSR (420 aa).

It in the N-terminal section; belongs to the methyltransferase superfamily. tRNA (mnm(5)s(2)U34)-methyltransferase family. In the C-terminal section; belongs to the DAO family. FAD is required as a cofactor.

The protein localises to the cytoplasm. The catalysed reaction is 5-aminomethyl-2-thiouridine(34) in tRNA + S-adenosyl-L-methionine = 5-methylaminomethyl-2-thiouridine(34) in tRNA + S-adenosyl-L-homocysteine + H(+). Its function is as follows. Catalyzes the last two steps in the biosynthesis of 5-methylaminomethyl-2-thiouridine (mnm(5)s(2)U) at the wobble position (U34) in tRNA. Catalyzes the FAD-dependent demodification of cmnm(5)s(2)U34 to nm(5)s(2)U34, followed by the transfer of a methyl group from S-adenosyl-L-methionine to nm(5)s(2)U34, to form mnm(5)s(2)U34. The polypeptide is tRNA 5-methylaminomethyl-2-thiouridine biosynthesis bifunctional protein MnmC (Yersinia pestis).